Consider the following 506-residue polypeptide: MEETLKSLSMDYLNLLINGQAFSDVTFSVEGRLVHAHRCILAARSLFFRKFFCGAAADQAAAPPGALLLDHLSPRSPSGGASASSPRGAGGSAAAAAAATPGAVIPVSSVSYEVFLLLLQFLYSGQVSLVPQKGEPRPGCGERGCWHTHCAAAVDLALDTLAAARSFGVEELALLTQKQLAGMVEKASIEDVMKVLMASRKQDLHQLWTTCSHLVAKSGLPPEVLAKHLPIDVVAKIDELRLKSMSRRSPFLSHHHHHPHAAAAGIEASSAAELDDHHKIRRMRRALDSSDVELVKLMVMGEGLNLDDALALHYAVENCSREVVKALLELGAADVNHPAGPAGKTPLHVAAEMVCPDMVAVLLDHHADPNVRTVDGVTPLDILRTLTSDFLFKGAVPGLAHIEPNKLRLCLELVQSAAMVMSREDAQTAAVNAAPIYGESPGGGGGGGVYNASGTSSSMVNLSLDNRMVYLNLGMDAQFGKMNDGGDGDDGGSRGPSSLFSPHGFP.

A BTB domain is found at 23 to 131; the sequence is SDVTFSVEGR…LYSGQVSLVP (109 aa). The segment at 137–151 adopts a C2HC NPR-type zinc-finger fold; it reads RPGCGERGCWHTHCA. Residues C140, C145, H147, and C150 each coordinate Zn(2+). ANK repeat units lie at residues 278 to 306, 307 to 337, 342 to 371, and 375 to 409; these read HKIR…GLNL, DDAL…DVNH, AGKT…DPNV, and DGVT…KLRL. The segment at 481-506 is disordered; it reads KMNDGGDGDDGGSRGPSSLFSPHGFP.

It belongs to the plant 'ANKYRIN-BTB/POZ' family. 'NOOT-BOP-COCH-like' (NBCL) subfamily. In terms of assembly, homodimer. Interacts with TGAL5, TGAL7, TGAL8 and TGAL11.

It is found in the nucleus. The protein resides in the cytoplasm. Its pathway is protein modification; protein ubiquitination. Its function is as follows. May act as a substrate-specific adapter of an E3 ubiquitin-protein ligase complex (CUL3-RBX1-BTB) which mediates the ubiquitination and subsequent proteasomal degradation of target proteins. Transcriptional co-regulator involved in the promotion of leaf and floral meristem fate and determinacy. Required for the abscission of senescent organs, probably by regulating the cell wall disorganization in abscission zones (AZs, e.g. pulvini at the base of leaves). Maybe involved in defense response against pathogens. This is BTB/POZ domain and ankyrin repeat-containing protein NPR5 from Oryza sativa subsp. japonica (Rice).